Reading from the N-terminus, the 390-residue chain is Anhydro-N-acetylmuramic acid kinase (390 aa).

Position 9-16 (9-16) interacts with ATP; it reads GTSLDGID.

This sequence belongs to the anhydro-N-acetylmuramic acid kinase family.

The catalysed reaction is 1,6-anhydro-N-acetyl-beta-muramate + ATP + H2O = N-acetyl-D-muramate 6-phosphate + ADP + H(+). Its pathway is amino-sugar metabolism; 1,6-anhydro-N-acetylmuramate degradation. It functions in the pathway cell wall biogenesis; peptidoglycan recycling. In terms of biological role, catalyzes the specific phosphorylation of 1,6-anhydro-N-acetylmuramic acid (anhMurNAc) with the simultaneous cleavage of the 1,6-anhydro ring, generating MurNAc-6-P. Is required for the utilization of anhMurNAc either imported from the medium or derived from its own cell wall murein, and thus plays a role in cell wall recycling. The chain is Anhydro-N-acetylmuramic acid kinase from Bacillus cereus (strain B4264).